A 341-amino-acid chain; its full sequence is L-threonine 3-dehydrogenase (341 aa).

Cys-38 is a binding site for Zn(2+). Catalysis depends on charge relay system residues Thr-40 and His-43. His-63, Glu-64, Cys-93, Cys-96, Cys-99, and Cys-107 together coordinate Zn(2+). Residues Ile-175, Asp-195, Arg-200, 262 to 264, and 286 to 287 each bind NAD(+); these read LGI and IY.

The protein belongs to the zinc-containing alcohol dehydrogenase family. Homotetramer. Requires Zn(2+) as cofactor.

It is found in the cytoplasm. The enzyme catalyses L-threonine + NAD(+) = (2S)-2-amino-3-oxobutanoate + NADH + H(+). Its pathway is amino-acid degradation; L-threonine degradation via oxydo-reductase pathway; glycine from L-threonine: step 1/2. Catalyzes the NAD(+)-dependent oxidation of L-threonine to 2-amino-3-ketobutyrate. This chain is L-threonine 3-dehydrogenase, found in Yersinia pestis bv. Antiqua (strain Antiqua).